The chain runs to 226 residues: Urease accessory protein UreF (226 aa).

This sequence belongs to the UreF family. In terms of assembly, ureD, UreF and UreG form a complex that acts as a GTP-hydrolysis-dependent molecular chaperone, activating the urease apoprotein by helping to assemble the nickel containing metallocenter of UreC. The UreE protein probably delivers the nickel.

The protein resides in the cytoplasm. Required for maturation of urease via the functional incorporation of the urease nickel metallocenter. The sequence is that of Urease accessory protein UreF from Janthinobacterium sp. (strain Marseille) (Minibacterium massiliensis).